Reading from the N-terminus, the 364-residue chain is tRNA-specific 2-thiouridylase MnmA 1 (364 aa).

ATP-binding positions include 11-18 and Phe37; that span reads GMSGGTDS. The active-site Nucleophile is Cys96. Cys96 and Cys193 are oxidised to a cystine. Gly120 is a binding site for ATP. An interaction with tRNA region spans residues 142–144; sequence KDQ. Catalysis depends on Cys193, which acts as the Cysteine persulfide intermediate. The interval 309-310 is interaction with tRNA; that stretch reads RY.

It belongs to the MnmA/TRMU family.

The protein localises to the cytoplasm. The catalysed reaction is S-sulfanyl-L-cysteinyl-[protein] + uridine(34) in tRNA + AH2 + ATP = 2-thiouridine(34) in tRNA + L-cysteinyl-[protein] + A + AMP + diphosphate + H(+). Catalyzes the 2-thiolation of uridine at the wobble position (U34) of tRNA, leading to the formation of s(2)U34. The polypeptide is tRNA-specific 2-thiouridylase MnmA 1 (Bacteroides fragilis (strain ATCC 25285 / DSM 2151 / CCUG 4856 / JCM 11019 / LMG 10263 / NCTC 9343 / Onslow / VPI 2553 / EN-2)).